The chain runs to 512 residues: Maturase K (512 aa).

It belongs to the intron maturase 2 family. MatK subfamily.

The protein localises to the plastid. It is found in the chloroplast. Its function is as follows. Usually encoded in the trnK tRNA gene intron. Probably assists in splicing its own and other chloroplast group II introns. The chain is Maturase K from Ginkgo biloba (Ginkgo).